Reading from the N-terminus, the 429-residue chain is Hydrogenobyrinate a,c-diamide synthase (429 aa).

The region spanning 240–429 (RTAVARDVAF…SFMHLIDFSE (190 aa)) is the GATase cobBQ-type domain. The Nucleophile role is filled by cysteine 323.

It belongs to the CobB/CbiA family. Requires Mg(2+) as cofactor.

It carries out the reaction hydrogenobyrinate + 2 L-glutamine + 2 ATP + 2 H2O = hydrogenobyrinate a,c-diamide + 2 L-glutamate + 2 ADP + 2 phosphate + 2 H(+). It participates in cofactor biosynthesis; adenosylcobalamin biosynthesis; cob(II)yrinate a,c-diamide from precorrin-2 (aerobic route): step 9/10. Catalyzes the ATP-dependent amidation of the two carboxylate groups at positions a and c of hydrogenobyrinate, using either L-glutamine or ammonia as the nitrogen source. This chain is Hydrogenobyrinate a,c-diamide synthase, found in Rhizobium meliloti (strain 1021) (Ensifer meliloti).